Consider the following 64-residue polypeptide: MHWLADYWWVVLIILVGMILNGIKELRRLDHKKFLSNKPEIPPHRDNNAQWDDDDDWPDKDKKK.

The chain crosses the membrane as a helical span at residues 3-23; the sequence is WLADYWWVVLIILVGMILNGI. The disordered stretch occupies residues 36–64; it reads SNKPEIPPHRDNNAQWDDDDDWPDKDKKK.

This sequence belongs to the UPF0370 family.

The protein resides in the cell membrane. The chain is UPF0370 protein YE1145 from Yersinia enterocolitica serotype O:8 / biotype 1B (strain NCTC 13174 / 8081).